The following is a 1188-amino-acid chain: Spermatogenesis-associated protein 31C1 (1188 aa).

Residues 23–43 (PWVLDIFLTLVFALGLFFLLL) form a helical membrane-spanning segment. 8 disordered regions span residues 57-92 (PSPR…KNHS), 121-249 (LEKG…LLTP), 483-510 (PGTS…EAQT), 530-567 (TPQN…DSGS), 733-813 (MPER…PTVP), 934-1013 (NMGH…PSIS), 1121-1143 (QQAT…QQPL), and 1155-1188 (LRHP…HHHH). Composition is skewed to basic residues over residues 59–68 (PRKRKRHLVS) and 80–92 (RRGR…KNHS). A compositionally biased stretch (basic and acidic residues) spans 138–154 (VGKRTPDGASRSSHEPM). The span at 191 to 207 (SSLSASQPPEPSLLLER) shows a compositional bias: low complexity. Residues 210–241 (PEPPALFPHPPHTPDPLACSPPPPKGFTPPPL) are compositionally biased toward pro residues. The segment covering 495–510 (WQSSTSTGESSKEAQT) has biased composition (polar residues). Polar residues-rich tracts occupy residues 783–800 (LKGS…SSRA) and 943–954 (PNCQGSCKSQSP). A compositionally biased stretch (basic and acidic residues) spans 960–976 (HKRENSRKPNLEKHEEM). The segment covering 1121–1130 (QQATLKNQSR) has biased composition (polar residues).

It belongs to the SPATA31 family.

The protein localises to the membrane. Functionally, may play a role in spermatogenesis. The protein is Spermatogenesis-associated protein 31C1 (SPATA31C1) of Homo sapiens (Human).